The following is a 302-amino-acid chain: 33 kDa chaperonin (302 aa).

2 disulfides stabilise this stretch: Cys-240/Cys-242 and Cys-273/Cys-276.

It belongs to the HSP33 family. Post-translationally, under oxidizing conditions two disulfide bonds are formed involving the reactive cysteines. Under reducing conditions zinc is bound to the reactive cysteines and the protein is inactive.

It localises to the cytoplasm. Redox regulated molecular chaperone. Protects both thermally unfolding and oxidatively damaged proteins from irreversible aggregation. Plays an important role in the bacterial defense system toward oxidative stress. The protein is 33 kDa chaperonin of Synechocystis sp. (strain ATCC 27184 / PCC 6803 / Kazusa).